A 198-amino-acid polypeptide reads, in one-letter code: Recombination protein RecR (198 aa).

The segment at 57-72 adopts a C4-type zinc-finger fold; sequence CSVCGHITDKDPCYIC. A Toprim domain is found at 80-175; it reads SVICVVQESK…KVTRIAHGLP (96 aa).

This sequence belongs to the RecR family.

Its function is as follows. May play a role in DNA repair. It seems to be involved in an RecBC-independent recombinational process of DNA repair. It may act with RecF and RecO. This is Recombination protein RecR from Listeria welshimeri serovar 6b (strain ATCC 35897 / DSM 20650 / CCUG 15529 / CIP 8149 / NCTC 11857 / SLCC 5334 / V8).